The sequence spans 464 residues: MSTQTKKVTRTIITSSSGGGGGGGGGRASYSSSGRFSGGGGRMRAGGVTSRRSVGSSYSAGGGGRVNAVMAAGVMASVGGPAGALQTLSDARMTRAHEKQELSHLNDRFASYIDKVRYLQERNSKLEAQIKIQESREAPNIKDLYEKELRDLRALVDELSNDKAQLEIERNNWQEQAEDYKMKWQDEAGLRSELEAEIERLKKELDAATMARLDLENKLSTAQEEIDFLKRVHDEEIRQLQDQLNESLTIVEVDSRAASTFAPGPDLTEALREIRTQYEELGRVNREDADVKYKQKFSELAHQRERDNEALMTARTEVTELRRNLNSLVAENEALKSKNHALEGSLAELEARMQLEIEEYQAAIRDLEQELETKTSEMAQQMQAYKMLMDTKMALDMEIAAYRKLLEGEEIRLFGESKEGVQQTSSSSSSSYQYSMKSGSGGGGGGSSSGKQQVTVSVSSGEEK.

Positions 1–14 (MSTQTKKVTRTIIT) are enriched in polar residues. Residues 1-59 (MSTQTKKVTRTIITSSSGGGGGGGGGRASYSSSGRFSGGGGRMRAGGVTSRRSVGSSYS) are disordered. Residues 1–101 (MSTQTKKVTR…RMTRAHEKQE (101 aa)) are head. Residues 17-27 (SGGGGGGGGGR) show a composition bias toward gly residues. The span at 45-59 (AGGVTSRRSVGSSYS) shows a compositional bias: low complexity. In terms of domain architecture, IF rod spans 98 to 413 (EKQELSHLND…KLLEGEEIRL (316 aa)). The coil 1A stretch occupies residues 102–133 (LSHLNDRFASYIDKVRYLQERNSKLEAQIKIQ). The segment at 134–144 (ESREAPNIKDL) is linker 1. The interval 145 to 237 (YEKELRDLRA…FLKRVHDEEI (93 aa)) is coil 1B. A linker 2 region spans residues 238–264 (RQLQDQLNESLTIVEVDSRAASTFAPG). The segment at 265–413 (PDLTEALREI…KLLEGEEIRL (149 aa)) is coil 2. A tail region spans residues 414 to 464 (FGESKEGVQQTSSSSSSSYQYSMKSGSGGGGGGSSSGKQQVTVSVSSGEEK). The interval 415–464 (GESKEGVQQTSSSSSSSYQYSMKSGSGGGGGGSSSGKQQVTVSVSSGEEK) is disordered. The span at 420–438 (GVQQTSSSSSSSYQYSMKS) shows a compositional bias: low complexity. The span at 439 to 448 (GSGGGGGGSS) shows a compositional bias: gly residues. Low complexity predominate over residues 449–464 (SGKQQVTVSVSSGEEK).

The protein belongs to the intermediate filament family. In terms of assembly, can form homopolymers.

The protein localises to the cytoplasm. The chain is Non-neuronal cytoplasmic intermediate filament protein from Branchiostoma lanceolatum (Common lancelet).